The chain runs to 801 residues: DNA mismatch repair protein MutS (801 aa).

590-597 (GPNMSGKS) is an ATP binding site.

It belongs to the DNA mismatch repair MutS family.

Its function is as follows. This protein is involved in the repair of mismatches in DNA. It is possible that it carries out the mismatch recognition step. This protein has a weak ATPase activity. This Thermotoga neapolitana (strain ATCC 49049 / DSM 4359 / NBRC 107923 / NS-E) protein is DNA mismatch repair protein MutS.